A 277-amino-acid polypeptide reads, in one-letter code: Large ribosomal subunit protein uL2 (277 aa).

Positions T219–K277 are disordered.

This sequence belongs to the universal ribosomal protein uL2 family. In terms of assembly, part of the 50S ribosomal subunit. Forms a bridge to the 30S subunit in the 70S ribosome.

One of the primary rRNA binding proteins. Required for association of the 30S and 50S subunits to form the 70S ribosome, for tRNA binding and peptide bond formation. It has been suggested to have peptidyltransferase activity; this is somewhat controversial. Makes several contacts with the 16S rRNA in the 70S ribosome. In Streptococcus suis (strain 98HAH33), this protein is Large ribosomal subunit protein uL2.